Reading from the N-terminus, the 367-residue chain is Glutamate 5-kinase (367 aa).

Lysine 17 provides a ligand contact to ATP. Serine 57, aspartate 144, and asparagine 156 together coordinate substrate. Residues 176-177 (SD) and 217-223 (TGGMTSK) contribute to the ATP site. Residues 279 to 357 (AGALTLDEGA…SELPGELRRP (79 aa)) form the PUA domain.

This sequence belongs to the glutamate 5-kinase family.

The protein resides in the cytoplasm. It carries out the reaction L-glutamate + ATP = L-glutamyl 5-phosphate + ADP. It participates in amino-acid biosynthesis; L-proline biosynthesis; L-glutamate 5-semialdehyde from L-glutamate: step 1/2. In terms of biological role, catalyzes the transfer of a phosphate group to glutamate to form L-glutamate 5-phosphate. The sequence is that of Glutamate 5-kinase from Mycobacterium avium (strain 104).